A 214-amino-acid chain; its full sequence is uncharacterized protein (214 aa).

Helical transmembrane passes span 33–53 (VILFVSLVFILSLVLLYILVV), 104–124 (ILGIFSLFVIAVNSYILSYVL), 132–152 (FIYLVLPHGIIEIPALILSAS), 153–173 (GGVLFNMGLVNFLINIKFGTK), and 186–206 (LLILSIILFIVAGIVEGTITF).

The protein resides in the cell membrane. This is an uncharacterized protein from Methanocaldococcus jannaschii (strain ATCC 43067 / DSM 2661 / JAL-1 / JCM 10045 / NBRC 100440) (Methanococcus jannaschii).